A 305-amino-acid chain; its full sequence is UPF0282 protein Pisl_0021 (305 aa).

The protein belongs to the UPF0282 family.

The polypeptide is UPF0282 protein Pisl_0021 (Pyrobaculum islandicum (strain DSM 4184 / JCM 9189 / GEO3)).